The sequence spans 266 residues: 2-Cys peroxiredoxin BAS1, chloroplastic (266 aa).

The segment covering 1-16 has biased composition (low complexity); sequence MASVASSTTLISSPSS. A disordered region spans residues 1 to 25; it reads MASVASSTTLISSPSSRVFPAKSSL. The N-terminal 65 residues, 1–65, are a transit peptide targeting the chloroplast; sequence MASVASSTTL…SSTSRRSFAV (65 aa). The Thioredoxin domain maps to 73–232; the sequence is PLVGNKAPDF…TMRTLQALQY (160 aa). Cysteine 119 acts as the Cysteine sulfenic acid (-SOH) intermediate in catalysis.

It belongs to the peroxiredoxin family. AhpC/Prx1 subfamily. In terms of assembly, homodimer; disulfide-linked, upon oxidation. Interacts with the plastidial thioredoxin CDSP32. Interacts with the plastidial NADPH-dependent thioredoxin reductase ANTR-C.

The protein localises to the plastid. It localises to the chloroplast. The enzyme catalyses a hydroperoxide + [thioredoxin]-dithiol = an alcohol + [thioredoxin]-disulfide + H2O. Its function is as follows. Thiol-specific peroxidase that catalyzes the reduction of hydrogen peroxide and organic hydroperoxides to water and alcohols, respectively. Plays a role in cell protection against oxidative stress by detoxifying peroxides. May be an antioxidant enzyme particularly in the developing shoot and photosynthesizing leaf. This is 2-Cys peroxiredoxin BAS1, chloroplastic (BAS1) from Arabidopsis thaliana (Mouse-ear cress).